The primary structure comprises 125 residues: ASPEAYVEYRKQALKASGDHMKALSAIVKGQLPLNAEAAKHAEAIAAIMESLPAAFPEGTAGIAKTEAKAVVWSKADEFKADAVKSADAAKALAQAATAGDTAQMGKALAALGGTCKGCHETFRE.

Heme c-binding residues include R10, E67, C116, C119, and H120.

Homodimer. Binds 1 heme c group covalently per subunit.

Cytochrome c' is the most widely occurring bacterial c-type cytochrome. Cytochromes c' are high-spin proteins and the heme has no sixth ligand. Their exact function is not known. In Pararhodospirillum photometricum (Rhodospirillum photometricum), this protein is Cytochrome c'.